A 474-amino-acid chain; its full sequence is MSIRAPPRLLELARQRLLRDQALAISTMEELPRELFPTLFMEAFSRRRCETLKTMVQAWPFTRLPLGSLMKSPHLESLKSVLEGVDVLLTQEVRPRQSKLQVLDLRNVDENFCDIFSGATASFPEALSQKQTADNCPGTGRQQPFMVFIDLCLKNRTLDECLTHLLEWGKQRKGLLHVCCKELQVFGMPIHSIIEVLNMVELDCIQEVEVCCPWELSTLVKFAPYLGQMRNLRKLVLFNIRASACIPPDNKGQFIARFTSQFLKLDYFQNLSMHSVSFLEGHLDQLLRCLQASLEMVVMTDCLLSESDLKHLSWCPSIRQLKELDLRGVTLTHFSPEPLTGLLEQAVATLQTLDLEDCGIMDSQLSAILPVLSRCSQLSTFSFCGNLISMAALENLLRHTVGLSKLSLELYPAPLESYDTQGALCWGRFAELGAELMNTLRDLRQPKIIVFCTVPCPRCGIRASYDLEPSHCLC.

One copy of the LRR 1; degenerate repeat lies at 97–122 (QSKLQVLDLRNVDENFCDIFSGATAS). One copy of the LRR 2; degenerate repeat lies at 177–201 (HVCCKELQVFGMPIHSIIEVLNMVE). An LRR 3; degenerate repeat occupies 202–228 (LDCIQEVEVCCPWELSTLVKFAPYLGQ). Residues 229–264 (MRNLRKLVLFNIRASACIPPDNKGQFIARFTSQFLK) form an LRR 4; degenerate repeat. 5 LRR repeats span residues 265–290 (LDYFQNLSMHSVSFLEGHLDQLLRCL), 291–322 (QASLEMVVMTDCLLSESDLKHLSWCPSIRQLK), 323–341 (ELDLRGVTLTHFSPEPLTG), 347–374 (VATLQTLDLEDCGIMDSQLSAILPVLSR), and 375–399 (CSQLSTFSFCGNLISMAALENLLRH).

The protein belongs to the PRAME family.

The sequence is that of PRAME family member 7 from Homo sapiens (Human).